Consider the following 1146-residue polypeptide: Reverse gyrase 1 (1146 aa).

The RG N-terminal-type zinc-finger motif lies at 1–38 (MIKAIFDTLCPNCGGEISAERLLKGLPCEKCLPEEVNR). Residues Cys-10, Cys-13, Cys-28, and Cys-31 each coordinate Zn(2+). Residues Gln-79 and 96 to 103 (APTGVGKT) contribute to the ATP site. One can recognise a Helicase ATP-binding domain in the interval 83–240 (ARKVFLGRSF…RLKEKPNKSE (158 aa)). Positions 197–200 (DDVD) match the DEAD box motif. Residues 412-565 (HLLWALLSLR…FKKIEEVDLK (154 aa)) form the Helicase C-terminal domain. Positions 592 to 1146 (EHVKPVLVVV…KVNEFEKANV (555 aa)) are topoisomerase I. Positions 596-728 (PVLVVVESPN…NVERIEFHEV (133 aa)) constitute a Toprim domain. Residues Glu-602 and Asp-697 each contribute to the Mg(2+) site. One can recognise a Topo IA-type catalytic domain in the interval 744–1142 (NENLVKAQLV…ELYKKVNEFE (399 aa)). The O-(5'-phospho-DNA)-tyrosine intermediate role is filled by Tyr-891.

This sequence in the N-terminal section; belongs to the DEAD box helicase family. DDVD subfamily. The protein in the C-terminal section; belongs to the type IA topoisomerase family. In terms of assembly, monomer. It depends on Zn(2+) as a cofactor. Mg(2+) serves as cofactor.

The protein resides in the cytoplasm. The catalysed reaction is ATP + H2O = ADP + phosphate + H(+). Its function is as follows. Modifies the topological state of DNA by introducing positive supercoils in an ATP-dependent process, increasing the linking number in steps of +1. Binds to single-stranded DNA, transiently cleaves and then rejoins the ends, introducing a positive supercoil in the process. The scissile phosphodiester is attacked by the catalytic tyrosine of the enzyme, resulting in the formation of a DNA-(5'-phosphotyrosyl)-enzyme intermediate. Probably involved in rewinding DNA strands in regions of the chromosome that have opened up to allow replication, transcription, DNA repair and/or for DNA protection. The sequence is that of Reverse gyrase 1 from Aquifex aeolicus (strain VF5).